Here is a 178-residue protein sequence, read N- to C-terminus: CDP-diacylglycerol--glycerol-3-phosphate 3-phosphatidyltransferase (178 aa).

4 helical membrane passes run L28–A48, L88–I108, L125–L145, and I147–Y167.

The protein belongs to the CDP-alcohol phosphatidyltransferase class-I family.

The protein resides in the cell membrane. The enzyme catalyses a CDP-1,2-diacyl-sn-glycerol + sn-glycerol 3-phosphate = a 1,2-diacyl-sn-glycero-3-phospho-(1'-sn-glycero-3'-phosphate) + CMP + H(+). It participates in phospholipid metabolism; phosphatidylglycerol biosynthesis; phosphatidylglycerol from CDP-diacylglycerol: step 1/2. This protein catalyzes the committed step to the synthesis of the acidic phospholipids. This is CDP-diacylglycerol--glycerol-3-phosphate 3-phosphatidyltransferase (pgsA) from Aquifex aeolicus (strain VF5).